A 535-amino-acid chain; its full sequence is MAQPGRASLKEQRYDRQLRLWGDHGQEALESAHVCVINATATGTEILKNLVLPGIGSFTIVDGNRVSGEDVGNNFFLQKSHIGQSRAQSATELLQELNNDVSGNFVEESPETLLDNDPSFFNRFNLVVATQLSESTVLRLAELLWNSNIPLLICRTYGLVGYMRIIIKEHPVVESHPDNALEDLRLDKQFPELTEHIQSYDLDHMDKKDHSHTPWIVIVAKYLTKWFNEKSDQLPKSYKEKEAFRQLIRQGILKNENGTPEDEENFEEAIKNVNTALNTTKIPRCIEEIFNDDCCVNLTEQSPSFWILVRAVKEFVANEGQGCLPVRGTIPDMIADSSKFIKLQNVYREKAKRDIAAVGNHAAKLLQSLGKAPESISERELKLLCSNSAFLRVVRCRSLSEEYGLNTFNKDEIISNMDNPDSEVVLYLMLRAVDRFYKQHGRYPGVYNYQVEDDIGKLKSCLTSFLQEHGLSVLVKDDYVHEFCRYGAAEPHAIAAFMGGAAAQEIIKVITGQFVIFNNTYIYSGMSQTSATFQL.

An interaction with UBA3 region spans residues 332 to 345; that stretch reads DMIADSSKFIKLQN.

It belongs to the ubiquitin-activating E1 family. ULA1 subfamily. Heterodimer of UBA3 and NAE1. The complex binds NEDD8 and UBE2M.

It functions in the pathway protein modification; protein neddylation. Functionally, regulatory subunit of the dimeric UBA3-NAE1 E1 enzyme. E1 activates NEDD8 by first adenylating its C-terminal glycine residue with ATP, thereafter linking this residue to the side chain of the catalytic cysteine, yielding a NEDD8-UBA3 thioester and free AMP. E1 finally transfers NEDD8 to the catalytic cysteine of UBE2M. The covalent attachment of NEDD8 to target proteins is known as 'neddylation' and the process is involved in the regulation of cell growth, viability and development. This is NEDD8-activating enzyme E1 regulatory subunit (NAE1) from Gallus gallus (Chicken).